Here is a 123-residue protein sequence, read N- to C-terminus: Ribosome-binding factor A (123 aa).

This sequence belongs to the RbfA family. As to quaternary structure, monomer. Binds 30S ribosomal subunits, but not 50S ribosomal subunits or 70S ribosomes.

The protein localises to the cytoplasm. Functionally, one of several proteins that assist in the late maturation steps of the functional core of the 30S ribosomal subunit. Associates with free 30S ribosomal subunits (but not with 30S subunits that are part of 70S ribosomes or polysomes). Required for efficient processing of 16S rRNA. May interact with the 5'-terminal helix region of 16S rRNA. The sequence is that of Ribosome-binding factor A from Solibacter usitatus (strain Ellin6076).